A 184-amino-acid chain; its full sequence is Endothelial cell-specific molecule 1 (184 aa).

A signal peptide spans 1 to 21; it reads MKSLLLLTTLLVPLHLGMAWS. One can recognise an IGFBP N-terminal domain in the interval 24–102; it reads YAVDCPEHCD…GDEFGICKDC (79 aa). 6 cysteine pairs are disulfide-bonded: C28/C51, C32/C53, C37/C54, C43/C57, C65/C83, and C77/C99. Residues 145-184 are disordered; it reads RTSASHTERDSASGDGNAVREEIGEGNAARPSVMKWLNPR. A compositionally biased stretch (basic and acidic residues) spans 150–167; the sequence is HTERDSASGDGNAVREEI. Residue S157 is glycosylated (O-linked (Xyl...) (chondroitin sulfate) serine).

In terms of processing, O-glycosylated; contains chondroitin sulfate and dermatan sulfate.

It is found in the secreted. In terms of biological role, involved in angiogenesis; promotes angiogenic sprouting. May have potent implications in lung endothelial cell-leukocyte interactions. The protein is Endothelial cell-specific molecule 1 (Esm1) of Mus musculus (Mouse).